A 544-amino-acid polypeptide reads, in one-letter code: Protein anon-37Cs (544 aa).

The protein localises to the cytoplasm. Its function is as follows. Has a non-vital function. This is Protein anon-37Cs (anon-37Cs) from Drosophila lebanonensis (Fruit fly).